We begin with the raw amino-acid sequence, 632 residues long: MPASLPGQDGGGTRTTRPRSQLRAACDSCNKSKTKCPGGNPCPLCQCSGIRCHYSVAHQLGRPKGSKNKRTLMREMQGSLGNGDASGQFQPNRIVTTAQAHISSNPSPVGSQSQQQQHPQQAGQQQQQQQQQQQQQHQQQQQQQQQQQQQQQQQQQQQQQQQQQQQQHQQQQQQQQQQQHLLPHAFSNTMQNAGTTAAYAGAEKEDSPLAMDDGELFSMLDQTLLMDTMTDEMSDFGQLVPQALPHPMTMPESLTSLLNHDTAFDATQLSNEYSTSSNSKPSTTDDSCMALPTPDSSTTHRPSSSVFGDGHITFSSGTASASRTSASSIVEQQSIPTSPVTVAPMSPAKSSSVPRTLPPATVTPTCTCLPGLVTLICQLEDLRHPPPPRHTSGQHPHQHPASPYSLKCILQGVQLAEEPWAGFARCLDAAGARKRHGAQENTVQDDDGNDHHRHALALYAMSIRIILSSIHKYRIALSMTGQQQRQHNFGDSPEDLDDAASVLVSVGGVQLAGETKSEMIKIAVRLALKQTTAALMRLLECRNRSSSAPSSATMQVAEYSVGHGRFESTAMVRDHPLPHSMSYSSLKTLAGPHTNMITGQDQLEKRENVAGMLSILQYTTKDLIDGANFDWR.

The segment at residues 26–52 (CDSCNKSKTKCPGGNPCPLCQCSGIRC) is a DNA-binding region (zn(2)-C6 fungal-type). The span at 101-111 (HISSNPSPVGS) shows a compositional bias: polar residues. Disordered regions lie at residues 101 to 129 (HISS…QQQQ), 270 to 311 (SNEY…GDGH), and 324 to 356 (TSAS…VPRT). Residues 112–129 (QSQQQQHPQQAGQQQQQQ) are compositionally biased toward low complexity. Composition is skewed to polar residues over residues 270-286 (SNEY…TTDD), 294-306 (PDSS…SSSV), and 329-340 (IVEQQSIPTSPV).

The protein resides in the nucleus. In terms of biological role, transcription factor; part of the gene cluster that mediates the biosynthesis of xenovulene A, an unusual meroterpenoid that has potent inhibitory effects on the human gamma-aminobutyrate A (GABAA) benzodiazepine receptor. The protein is Transcription factor asR4 of Sarocladium schorii (Acremonium strictum (strain IMI 501407)).